A 320-amino-acid chain; its full sequence is tRNA uridine(34) hydroxylase (320 aa).

One can recognise a Rhodanese domain in the interval 123–217 (EDEDTVILDA…YGKDPETKGQ (95 aa)). Cys177 serves as the catalytic Cysteine persulfide intermediate.

It belongs to the TrhO family.

The catalysed reaction is uridine(34) in tRNA + AH2 + O2 = 5-hydroxyuridine(34) in tRNA + A + H2O. Catalyzes oxygen-dependent 5-hydroxyuridine (ho5U) modification at position 34 in tRNAs. This Staphylococcus haemolyticus (strain JCSC1435) protein is tRNA uridine(34) hydroxylase.